We begin with the raw amino-acid sequence, 336 residues long: Inositol 2-dehydrogenase (336 aa).

It belongs to the Gfo/Idh/MocA family. In terms of assembly, homotetramer.

The enzyme catalyses myo-inositol + NAD(+) = scyllo-inosose + NADH + H(+). Its function is as follows. Involved in the oxidation of myo-inositol (MI) to 2-keto-myo-inositol (2KMI or 2-inosose). This is Inositol 2-dehydrogenase from Agrobacterium fabrum (strain C58 / ATCC 33970) (Agrobacterium tumefaciens (strain C58)).